The chain runs to 367 residues: tRNA-specific 2-thiouridylase MnmA (367 aa).

ATP contacts are provided by residues 14–21 and leucine 40; that span reads AMSGGVDS. Cysteine 108 functions as the Nucleophile in the catalytic mechanism. Residues cysteine 108 and cysteine 204 are joined by a disulfide bond. Residue glycine 132 participates in ATP binding. Positions 154-156 are interaction with tRNA; it reads KDQ. Catalysis depends on cysteine 204, which acts as the Cysteine persulfide intermediate.

Belongs to the MnmA/TRMU family.

Its subcellular location is the cytoplasm. It carries out the reaction S-sulfanyl-L-cysteinyl-[protein] + uridine(34) in tRNA + AH2 + ATP = 2-thiouridine(34) in tRNA + L-cysteinyl-[protein] + A + AMP + diphosphate + H(+). In terms of biological role, catalyzes the 2-thiolation of uridine at the wobble position (U34) of tRNA, leading to the formation of s(2)U34. This chain is tRNA-specific 2-thiouridylase MnmA, found in Rickettsia bellii (strain OSU 85-389).